We begin with the raw amino-acid sequence, 215 residues long: T-complex protein 10A homolog 1 (215 aa).

Residues 1 to 25 (MLAGQLEARDPKEGTHPEDPCPGAG) are disordered. Over residues 7 to 19 (EARDPKEGTHPED) the composition is skewed to basic and acidic residues. A coiled-coil region spans residues 69 to 110 (ADVHGKLRSHIDALREQNMELREKLRALQLQRWKARKKSAAS). Residues 75–96 (LRSHIDALREQNMELREKLRAL) are leucine-zipper. The segment covering 150 to 163 (ATLLGQRSSSNNSA) has biased composition (polar residues). The disordered stretch occupies residues 150–215 (ATLLGQRSSS…TPCAERRGGV (66 aa)).

It belongs to the TCP10 family. Self-associates (via leucine zipper). Interacts (via leucine zipper) with ZIPK/DAPK3 (via leucine zipper). Interacts with MAD4. As to expression, expressed in liver and testis. Expressed in the seminiferous tubules (at protein level).

Its subcellular location is the nucleus. In terms of biological role, may be involved in transcriptional regulation. Has in vitro transcription inhibition activity. Acts as a tumor suppressor in hepatocellular carcinoma (HCC) cells. The polypeptide is T-complex protein 10A homolog 1 (TCP10L) (Homo sapiens (Human)).